Consider the following 254-residue polypeptide: Thiazole synthase (254 aa).

Lysine 95 acts as the Schiff-base intermediate with DXP in catalysis. 1-deoxy-D-xylulose 5-phosphate is bound by residues glycine 156, 182–183 (AG), and 204–205 (NT).

It belongs to the ThiG family. In terms of assembly, homotetramer. Forms heterodimers with either ThiH or ThiS.

It localises to the cytoplasm. The catalysed reaction is [ThiS sulfur-carrier protein]-C-terminal-Gly-aminoethanethioate + 2-iminoacetate + 1-deoxy-D-xylulose 5-phosphate = [ThiS sulfur-carrier protein]-C-terminal Gly-Gly + 2-[(2R,5Z)-2-carboxy-4-methylthiazol-5(2H)-ylidene]ethyl phosphate + 2 H2O + H(+). Its pathway is cofactor biosynthesis; thiamine diphosphate biosynthesis. Its function is as follows. Catalyzes the rearrangement of 1-deoxy-D-xylulose 5-phosphate (DXP) to produce the thiazole phosphate moiety of thiamine. Sulfur is provided by the thiocarboxylate moiety of the carrier protein ThiS. In vitro, sulfur can be provided by H(2)S. This chain is Thiazole synthase, found in Shewanella piezotolerans (strain WP3 / JCM 13877).